The chain runs to 86 residues: Cyclin-dependent kinase inhibitor 6 (86 aa).

Residues 1–15 (MAAAAATVTAVQPAA) show a composition bias toward low complexity. The disordered stretch occupies residues 1–23 (MAAAAATVTAVQPAASSCGKRDG).

Belongs to the CDI family. ICK/KRP subfamily.

The sequence is that of Cyclin-dependent kinase inhibitor 6 (KRP6) from Oryza sativa subsp. japonica (Rice).